The chain runs to 194 residues: 22 kDa relaxation protein (194 aa).

This protein is probably required for relaxation complex formation. The sequence is that of 22 kDa relaxation protein from Salmonella typhimurium.